The following is a 340-amino-acid chain: Cell growth-regulated gene 1 protein (340 aa).

This sequence belongs to the SMP-30/CGR1 family.

Its function is as follows. Involved in the cell growth regulation. The polypeptide is Cell growth-regulated gene 1 protein (CGR1) (Candida albicans (strain SC5314 / ATCC MYA-2876) (Yeast)).